The chain runs to 207 residues: Protein GET1 (207 aa).

The Lumenal portion of the chain corresponds to 1–4 (MPSL). Residues 5-24 (LISVLFLHIAIYIINTIGAS) form a helical membrane-spanning segment. The Cytoplasmic portion of the chain corresponds to 25 to 110 (TIDSLLWLIY…LFDVAVKALR (86 aa)). The stretch at 44 to 97 (MAREQHQMKLEVVQLKREMNATSSQDEFAKWAKLRRRHDKALEEYEVKNKQFSR) forms a coiled coil. Residues 111 to 131 (WAGTSGLILLLQFWFSKTPIF) traverse the membrane as a helical segment. The Lumenal portion of the chain corresponds to 132 to 155 (TLPPSWIPWQVEWVLSFPRAPMGT). Residues 156–172 (VSIQVWGGACAVMVALV) traverse the membrane as a helical segment. Residues 173–207 (GEAIGATVRYLYGSKDSMEAIKVGAGAVEKEKKRQ) lie on the Cytoplasmic side of the membrane.

Belongs to the WRB/GET1 family. In terms of assembly, interacts with GET3.

It is found in the endoplasmic reticulum membrane. Functionally, required for the post-translational delivery of tail-anchored (TA) proteins to the endoplasmic reticulum. Acts as a membrane receptor for soluble GET3, which recognizes and selectively binds the transmembrane domain of TA proteins in the cytosol. This is Protein GET1 from Paracoccidioides lutzii (strain ATCC MYA-826 / Pb01) (Paracoccidioides brasiliensis).